Consider the following 448-residue polypeptide: Trk system potassium uptake protein TrkA homolog 2 (448 aa).

An RCK N-terminal 1 domain is found at 1–124 (MKAVVIGAGE…RAQVGVDIMI (124 aa)). NAD(+) is bound by residues 7 to 11 (GAGEV), Glu-29, 70 to 71 (TG), and Arg-101. In terms of domain architecture, RCK C-terminal 1 spans 144–225 (IDAEMFAGGK…MADLENVFGN (82 aa)). Residues 230 to 348 (RNRILLIGCG…FEMVGIDIAV (119 aa)) form the RCK N-terminal 2 domain. Residue 232-262 (RILLIGCGIVGFYLAKIIDKDENADLKVIEY) coordinates NAD(+). Positions 368 to 448 (EALATIEGEK…AVRSVEKLFK (81 aa)) constitute an RCK C-terminal 2 domain.

Part of a potassium transport system. This is Trk system potassium uptake protein TrkA homolog 2 (trkA2) from Methanosarcina mazei (strain ATCC BAA-159 / DSM 3647 / Goe1 / Go1 / JCM 11833 / OCM 88) (Methanosarcina frisia).